A 192-amino-acid polypeptide reads, in one-letter code: Orotate phosphoribosyltransferase (192 aa).

5-phospho-alpha-D-ribose 1-diphosphate is bound by residues Arg-101, Lys-102, Lys-105, His-107, and Glu-129–Ser-137. Positions 133 and 161 each coordinate orotate.

This sequence belongs to the purine/pyrimidine phosphoribosyltransferase family. PyrE subfamily. In terms of assembly, homodimer. It depends on Mg(2+) as a cofactor.

It carries out the reaction orotidine 5'-phosphate + diphosphate = orotate + 5-phospho-alpha-D-ribose 1-diphosphate. It functions in the pathway pyrimidine metabolism; UMP biosynthesis via de novo pathway; UMP from orotate: step 1/2. In terms of biological role, catalyzes the transfer of a ribosyl phosphate group from 5-phosphoribose 1-diphosphate to orotate, leading to the formation of orotidine monophosphate (OMP). In Sorangium cellulosum (strain So ce56) (Polyangium cellulosum (strain So ce56)), this protein is Orotate phosphoribosyltransferase.